The following is a 157-amino-acid chain: SsrA-binding protein (157 aa).

Belongs to the SmpB family.

The protein localises to the cytoplasm. Its function is as follows. Required for rescue of stalled ribosomes mediated by trans-translation. Binds to transfer-messenger RNA (tmRNA), required for stable association of tmRNA with ribosomes. tmRNA and SmpB together mimic tRNA shape, replacing the anticodon stem-loop with SmpB. tmRNA is encoded by the ssrA gene; the 2 termini fold to resemble tRNA(Ala) and it encodes a 'tag peptide', a short internal open reading frame. During trans-translation Ala-aminoacylated tmRNA acts like a tRNA, entering the A-site of stalled ribosomes, displacing the stalled mRNA. The ribosome then switches to translate the ORF on the tmRNA; the nascent peptide is terminated with the 'tag peptide' encoded by the tmRNA and targeted for degradation. The ribosome is freed to recommence translation, which seems to be the essential function of trans-translation. The polypeptide is SsrA-binding protein (Chlorobium chlorochromatii (strain CaD3)).